The sequence spans 156 residues: Arginine repressor (156 aa).

It belongs to the ArgR family.

It is found in the cytoplasm. It functions in the pathway amino-acid biosynthesis; L-arginine biosynthesis [regulation]. Functionally, regulates arginine biosynthesis genes. In Shewanella halifaxensis (strain HAW-EB4), this protein is Arginine repressor.